The chain runs to 362 residues: Tyrosine-protein kinase SRK2 (362 aa).

The SH2 domain maps to 1–70 (TFLVRESESK…GLCVNLRQPC (70 aa)). A Protein kinase domain is found at 95-348 (ITLIRKLGAG…ALQWRLEDFF (254 aa)). ATP-binding positions include 101–109 (LGAGQFGEV) and Lys123. Catalysis depends on Asp214, which acts as the Proton acceptor.

The protein belongs to the protein kinase superfamily. Tyr protein kinase family.

The protein localises to the cytoplasm. It catalyses the reaction L-tyrosyl-[protein] + ATP = O-phospho-L-tyrosyl-[protein] + ADP + H(+). This Spongilla lacustris (Freshwater sponge) protein is Tyrosine-protein kinase SRK2 (SRK2).